We begin with the raw amino-acid sequence, 573 residues long: Multidrug and toxin extrusion protein 2 (573 aa).

At 1-46 (MEPAEDSLGATIQPPELVRVPRGRSLRILLGLRGALSPDVRREAAA) the chain is on the cytoplasmic side. Residues 47–67 (LVALAGPVFLAQLMIFLISIV) form a helical membrane-spanning segment. Topologically, residues 68–81 (SSIFCGHLGKVELD) are extracellular. A helical membrane pass occupies residues 82-102 (AVTLAVSVVNVTGISVGTGLA). Residues 103-122 (SACDTLMSQSFGGKNLKRVG) are Cytoplasmic-facing. Residues 123–143 (VILQRGILILLLCCFPCWAIF) form a helical membrane-spanning segment. Over 144 to 161 (LNTERLLLLLRQDPDVAR) the chain is Extracellular. The helical transmembrane segment at 162 to 182 (LAQVYVMICIPALPAAFLFQL) threads the bilayer. The Cytoplasmic segment spans residues 183 to 196 (QTRYLQSQGIIMPQ). The helical transmembrane segment at 197 to 217 (VIVGIAANVVNVGMNAFLLYA) threads the bilayer. The Extracellular portion of the chain corresponds to 218 to 225 (LDLGVVGS). Residues 226–246 (AWANTTSQFFLSALLFLYVWW) traverse the membrane as a helical segment. Residues 247–266 (KRIHIHTWGGWTRECFQEWS) lie on the Cytoplasmic side of the membrane. A helical membrane pass occupies residues 267-286 (SYTRLAIPSMFMVCIEWWTF). The Extracellular portion of the chain corresponds to 287 to 304 (EIGTFLAGLVNVTELGAQ). A helical membrane pass occupies residues 305–325 (AVIYELASVAYMVPFGFGVAA). Residues 326–345 (SVRVGNALGAGNADQARCSC) lie on the Cytoplasmic side of the membrane. Residues 346–366 (TTVLLCAGVCALLVGILLAAL) traverse the membrane as a helical segment. Topologically, residues 367 to 379 (KDVVAYIFTNDKD) are extracellular. A helical transmembrane segment spans residues 380-400 (IISLVSQVMPIFAPFHLFDAL). The Cytoplasmic portion of the chain corresponds to 401–415 (AGTCGGVLRGTGKQK). A helical transmembrane segment spans residues 416–436 (IGAVLNTIGYYGFGFPIGVSL). At 437-443 (MFAAKLG) the chain is on the extracellular side. Residues 444-464 (IIGLWAGLIVCVSFQAFSYLI) traverse the membrane as a helical segment. At 465–545 (YILRTNWSRV…VGEVLTGRQL (81 aa)) the chain is on the cytoplasmic side. A helical transmembrane segment spans residues 546–566 (VFYRGMALTVSVAVLIAGIVV). Residues 567–573 (RVFNDRG) are Extracellular-facing.

It belongs to the multi antimicrobial extrusion (MATE) (TC 2.A.66.1) family. In terms of tissue distribution, expressed in testis; especially in testicular Leydig cells.

It is found in the cell membrane. In terms of biological role, multidrug efflux pump that functions as a H(+)/organic cation antiporter. May mediate testosterone efflux from the Leydig cells in the testes. In Mus musculus (Mouse), this protein is Multidrug and toxin extrusion protein 2 (Slc47a2).